The following is a 285-amino-acid chain: uncharacterized protein (285 aa).

The region spanning 92 to 199 (TLLLADVEES…PTINRTARLR (108 aa)) is the Guanylate cyclase domain.

The protein belongs to the adenylyl cyclase class-4/guanylyl cyclase family.

This is an uncharacterized protein from Mycobacterium tuberculosis (strain CDC 1551 / Oshkosh).